Here is a 200-residue protein sequence, read N- to C-terminus: dTTP/UTP pyrophosphatase (200 aa).

The active-site Proton acceptor is Asp72.

It belongs to the Maf family. YhdE subfamily. A divalent metal cation serves as cofactor.

The protein localises to the cytoplasm. It catalyses the reaction dTTP + H2O = dTMP + diphosphate + H(+). The enzyme catalyses UTP + H2O = UMP + diphosphate + H(+). Nucleoside triphosphate pyrophosphatase that hydrolyzes dTTP and UTP. May have a dual role in cell division arrest and in preventing the incorporation of modified nucleotides into cellular nucleic acids. The polypeptide is dTTP/UTP pyrophosphatase (Pseudomonas savastanoi pv. phaseolicola (strain 1448A / Race 6) (Pseudomonas syringae pv. phaseolicola (strain 1448A / Race 6))).